The following is a 59-amino-acid chain: Embryonic testis differentiation protein (59 aa).

Residues 1–28 (MDEKNPEAVPRPPEQNTELVPPKKSKSK) are disordered.

As to expression, specifically expressed in testis.

The chain is Embryonic testis differentiation protein from Mus musculus (Mouse).